A 692-amino-acid polypeptide reads, in one-letter code: Vitamin B12-dependent ribonucleoside-diphosphate reductase (692 aa).

Positions 7–95 (AKVRRRDGTL…IYRQRRAELR (89 aa)) constitute an ATP-cone domain. Substrate-binding positions include Ser177, 192 to 193 (GC), Gly221, 375 to 379 (NPCGE), and 520 to 524 (PTGTI). Cys193 and Cys388 form a disulfide bridge. Catalysis depends on Asn375, which acts as the Proton acceptor. The active-site Cysteine radical intermediate is the Cys377. The active-site Proton acceptor is Glu379.

It belongs to the ribonucleoside diphosphate reductase class-2 family. Adenosylcob(III)alamin is required as a cofactor.

It carries out the reaction a 2'-deoxyribonucleoside 5'-diphosphate + [thioredoxin]-disulfide + H2O = a ribonucleoside 5'-diphosphate + [thioredoxin]-dithiol. Functionally, provides the precursors necessary for DNA synthesis. Catalyzes the biosynthesis of deoxyribonucleotides from the corresponding ribonucleotides. The chain is Vitamin B12-dependent ribonucleoside-diphosphate reductase (nrdZ) from Mycobacterium tuberculosis (strain CDC 1551 / Oshkosh).